Reading from the N-terminus, the 395-residue chain is FAD-dependent urate hydroxylase (395 aa).

FAD contacts are provided by residues G11, 30–31, S43, and M125; that span reads ER. Residues N180, R206, and 218–220 contribute to the substrate site; that span reads YFF. FAD contacts are provided by residues D287 and 297–301; that span reads GQGGC.

This sequence belongs to the FAD-dependent urate hydroxylase family. As to quaternary structure, monomer. The cofactor is FAD.

It carries out the reaction urate + NADH + O2 + H(+) = 5-hydroxyisourate + NAD(+) + H2O. Its pathway is purine metabolism; urate degradation. Catalyzes the hydroxylation of urate to 5-hydroxyisourate (HIU). Is likely to be involved in the urate degradation pathway to allantoin. Prefers NADH over NADPH as the electron donor. This is FAD-dependent urate hydroxylase from Mycolicibacterium vanbaalenii (strain DSM 7251 / JCM 13017 / BCRC 16820 / KCTC 9966 / NRRL B-24157 / PYR-1) (Mycobacterium vanbaalenii).